The following is a 122-amino-acid chain: uncharacterized protein (122 aa).

Positions 1–22 (MNMMRIFYIGLSGVGMMFSSMA) are cleaved as a signal peptide.

This is an uncharacterized protein from Escherichia coli (strain K12).